The chain runs to 631 residues: Phosphomethylpyrimidine synthase (631 aa).

Residues Asn-239, Met-268, Tyr-297, His-333, 353-355, 394-397, and Glu-433 each bind substrate; these read SRG and DGLR. Position 437 (His-437) interacts with Zn(2+). Position 460 (Tyr-460) interacts with substrate. His-501 serves as a coordination point for Zn(2+). 3 residues coordinate [4Fe-4S] cluster: Cys-581, Cys-584, and Cys-589.

It belongs to the ThiC family. Homodimer. The cofactor is [4Fe-4S] cluster.

It catalyses the reaction 5-amino-1-(5-phospho-beta-D-ribosyl)imidazole + S-adenosyl-L-methionine = 4-amino-2-methyl-5-(phosphooxymethyl)pyrimidine + CO + 5'-deoxyadenosine + formate + L-methionine + 3 H(+). It functions in the pathway cofactor biosynthesis; thiamine diphosphate biosynthesis. Catalyzes the synthesis of the hydroxymethylpyrimidine phosphate (HMP-P) moiety of thiamine from aminoimidazole ribotide (AIR) in a radical S-adenosyl-L-methionine (SAM)-dependent reaction. This chain is Phosphomethylpyrimidine synthase, found in Shigella flexneri serotype 5b (strain 8401).